The following is a 620-amino-acid chain: DNA mismatch repair protein MutL (620 aa).

This sequence belongs to the DNA mismatch repair MutL/HexB family.

In terms of biological role, this protein is involved in the repair of mismatches in DNA. It is required for dam-dependent methyl-directed DNA mismatch repair. May act as a 'molecular matchmaker', a protein that promotes the formation of a stable complex between two or more DNA-binding proteins in an ATP-dependent manner without itself being part of a final effector complex. The protein is DNA mismatch repair protein MutL of Clostridium tetani (strain Massachusetts / E88).